The sequence spans 707 residues: Elongation factor G (707 aa).

A tr-type G domain is found at 8–297 (ERVRNIGIAA…AVLDYLPSPL (290 aa)). GTP-binding positions include 17–24 (AHIDAGKT), 96–100 (DTPGH), and 150–153 (NKMD).

It belongs to the TRAFAC class translation factor GTPase superfamily. Classic translation factor GTPase family. EF-G/EF-2 subfamily.

Its subcellular location is the cytoplasm. Catalyzes the GTP-dependent ribosomal translocation step during translation elongation. During this step, the ribosome changes from the pre-translocational (PRE) to the post-translocational (POST) state as the newly formed A-site-bound peptidyl-tRNA and P-site-bound deacylated tRNA move to the P and E sites, respectively. Catalyzes the coordinated movement of the two tRNA molecules, the mRNA and conformational changes in the ribosome. The chain is Elongation factor G from Gloeobacter violaceus (strain ATCC 29082 / PCC 7421).